The primary structure comprises 233 residues: uncharacterized protein (233 aa).

Residues 196–212 are the nascent chain stimulates ribosomal stalling during translation by interfering with the conformation of the peptidyl transferase center (PTC), and the translating mRNA by adopting a difficult-to-decode structure at the ribosome decoding center; the sequence is FFYEDYLIFDCRAKRRK.

Functionally, acts as an endogenous target of the ribosome quality control (RQC) pathway. During translation, the nascent chain has a propensity to stall ribosomes, thereby stimulating activation of the RQC pathway. This is an uncharacterized protein from Saccharomyces cerevisiae (strain ATCC 204508 / S288c) (Baker's yeast).